We begin with the raw amino-acid sequence, 462 residues long: Putative endoglucanase type B (462 aa).

The N-terminal stretch at 1 to 16 (MAYKLILAAFAATALA) is a signal peptide. Positions 25–61 (CSNGVWAQCGGQNWSGTPCCTSGNKCVKLNDFYSQCQ) constitute a CBM1 domain. Cystine bridges form between cysteine 33–cysteine 50 and cysteine 44–cysteine 60. Residue asparagine 37 is glycosylated (N-linked (GlcNAc...) asparagine). Low complexity predominate over residues 64-100 (SAEPSSTAAGPSSTTATKTTATGGSSTTAGGSVTSAP). The tract at residues 64-102 (SAEPSSTAAGPSSTTATKTTATGGSSTTAGGSVTSAPPA) is disordered. The segment at 66–99 (EPSSTAAGPSSTTATKTTATGGSSTTAGGSVTSA) is linker. The segment at 100-462 (PPAASDNPYA…LLDNANPSFL (363 aa)) is catalytic. Residue aspartate 190 is part of the active site. Residues cysteine 191 and cysteine 250 are joined by a disulfide bond. Residue asparagine 223 is glycosylated (N-linked (GlcNAc...) asparagine). Aspartate 236 serves as the catalytic Proton donor. Residues asparagine 272 and asparagine 317 are each glycosylated (N-linked (GlcNAc...) asparagine). The cysteines at positions 383 and 430 are disulfide-linked. The Nucleophile role is filled by aspartate 416.

This sequence belongs to the glycosyl hydrolase 6 (cellulase B) family.

The enzyme catalyses Endohydrolysis of (1-&gt;4)-beta-D-glucosidic linkages in cellulose, lichenin and cereal beta-D-glucans.. This Fusarium oxysporum (Fusarium vascular wilt) protein is Putative endoglucanase type B.